A 252-amino-acid polypeptide reads, in one-letter code: tRNA (guanine-N(1)-)-methyltransferase (252 aa).

Residues Gly118 and 138–143 (IGDYVL) contribute to the S-adenosyl-L-methionine site.

This sequence belongs to the RNA methyltransferase TrmD family. In terms of assembly, homodimer.

The protein resides in the cytoplasm. The enzyme catalyses guanosine(37) in tRNA + S-adenosyl-L-methionine = N(1)-methylguanosine(37) in tRNA + S-adenosyl-L-homocysteine + H(+). Specifically methylates guanosine-37 in various tRNAs. This is tRNA (guanine-N(1)-)-methyltransferase from Pseudomonas paraeruginosa (strain DSM 24068 / PA7) (Pseudomonas aeruginosa (strain PA7)).